A 252-amino-acid polypeptide reads, in one-letter code: 5'-nucleotidase SurE (252 aa).

A divalent metal cation contacts are provided by Asp8, Asp9, Ser40, and Asn93.

Belongs to the SurE nucleotidase family. A divalent metal cation serves as cofactor.

The protein localises to the cytoplasm. The catalysed reaction is a ribonucleoside 5'-phosphate + H2O = a ribonucleoside + phosphate. Nucleotidase that shows phosphatase activity on nucleoside 5'-monophosphates. This Methylocella silvestris (strain DSM 15510 / CIP 108128 / LMG 27833 / NCIMB 13906 / BL2) protein is 5'-nucleotidase SurE.